We begin with the raw amino-acid sequence, 514 residues long: MTVEIRRPVALVILDGWGINPVCEHNAVCQADTPRLRALLESWPHARIGASGRDVGLPDGQMGNSEVGHLNIGAGRTVYQDLTRISLSIEEDTFFENTELRKVMQQVVESQGKLHLMGLLSDGGVHSHMEHLYALVEMARRAGVEQVCIHAFMDGRDTPPQSGAGYLAQLEDKLQDIGLGRVATVIGRYWAMDRDNRWERVEKAYRAMTEGVGTSFESSAAAIADAYAQGQTDEFVEPRFVGGEKPCTVDDGDGMIFFNFRADRAREITRTFTSSDFSGFSREKTPRLAGYVCLTEYDASFGLPMAFPPETYPELLGEVVSRAGRKQLRIAETEKYAHVTFFFNGGSEEPFDGEDRVLIPSPKEVATYDLKPEMSAPAVTDAMLERVASGRYDLIVLNFANPDMVGHTGVESAAIAAMETVDACVGRVVDAVLNAGGSLLITADHGNCEQMADAKGAPHTAHTSNPVPVILVDPDRTGVKLRNGILADLAPTLLELMGIDKPAAMTGRSLLEPS.

Residues Asp-15 and Ser-65 each contribute to the Mn(2+) site. Ser-65 functions as the Phosphoserine intermediate in the catalytic mechanism. Substrate is bound by residues His-126, 156 to 157 (RD), Arg-188, Arg-194, 261 to 264 (RADR), and Lys-335. Residues Asp-403, His-407, Asp-444, His-445, and His-462 each coordinate Mn(2+).

Belongs to the BPG-independent phosphoglycerate mutase family. As to quaternary structure, monomer. The cofactor is Mn(2+).

The enzyme catalyses (2R)-2-phosphoglycerate = (2R)-3-phosphoglycerate. The protein operates within carbohydrate degradation; glycolysis; pyruvate from D-glyceraldehyde 3-phosphate: step 3/5. In terms of biological role, catalyzes the interconversion of 2-phosphoglycerate and 3-phosphoglycerate. The chain is 2,3-bisphosphoglycerate-independent phosphoglycerate mutase from Syntrophotalea carbinolica (strain DSM 2380 / NBRC 103641 / GraBd1) (Pelobacter carbinolicus).